A 374-amino-acid chain; its full sequence is Queuine tRNA-ribosyltransferase (374 aa).

Residue D95 is the Proton acceptor of the active site. Substrate-binding positions include 95–99 (DSGGF), D149, Q191, and G218. Positions 249-255 (GVGTYRE) are RNA binding. The active-site Nucleophile is the D268. Residues 273–277 (TRWAR) form an RNA binding; important for wobble base 34 recognition region. C306, C308, C311, and H337 together coordinate Zn(2+).

The protein belongs to the queuine tRNA-ribosyltransferase family. As to quaternary structure, homodimer. Within each dimer, one monomer is responsible for RNA recognition and catalysis, while the other monomer binds to the replacement base PreQ1. Requires Zn(2+) as cofactor.

The enzyme catalyses 7-aminomethyl-7-carbaguanine + guanosine(34) in tRNA = 7-aminomethyl-7-carbaguanosine(34) in tRNA + guanine. It functions in the pathway tRNA modification; tRNA-queuosine biosynthesis. Functionally, catalyzes the base-exchange of a guanine (G) residue with the queuine precursor 7-aminomethyl-7-deazaguanine (PreQ1) at position 34 (anticodon wobble position) in tRNAs with GU(N) anticodons (tRNA-Asp, -Asn, -His and -Tyr). Catalysis occurs through a double-displacement mechanism. The nucleophile active site attacks the C1' of nucleotide 34 to detach the guanine base from the RNA, forming a covalent enzyme-RNA intermediate. The proton acceptor active site deprotonates the incoming PreQ1, allowing a nucleophilic attack on the C1' of the ribose to form the product. After dissociation, two additional enzymatic reactions on the tRNA convert PreQ1 to queuine (Q), resulting in the hypermodified nucleoside queuosine (7-(((4,5-cis-dihydroxy-2-cyclopenten-1-yl)amino)methyl)-7-deazaguanosine). This is Queuine tRNA-ribosyltransferase from Nostoc sp. (strain PCC 7120 / SAG 25.82 / UTEX 2576).